The chain runs to 200 residues: LexA repressor (200 aa).

The segment at residues 28 to 48 (RAEIAQHFGFSSPNAAEQHLK) is a DNA-binding region (H-T-H motif). Active-site for autocatalytic cleavage activity residues include Ser-117 and Lys-154.

Belongs to the peptidase S24 family. Homodimer.

The catalysed reaction is Hydrolysis of Ala-|-Gly bond in repressor LexA.. Functionally, represses a number of genes involved in the response to DNA damage (SOS response), including recA and lexA. In the presence of single-stranded DNA, RecA interacts with LexA causing an autocatalytic cleavage which disrupts the DNA-binding part of LexA, leading to derepression of the SOS regulon and eventually DNA repair. The chain is LexA repressor from Thiobacillus denitrificans (strain ATCC 25259 / T1).